The primary structure comprises 500 residues: Probable cytosol aminopeptidase (500 aa).

Lysine 261 and aspartate 266 together coordinate Mn(2+). Lysine 273 is a catalytic residue. Mn(2+) is bound by residues aspartate 284, aspartate 343, and glutamate 345. Residue arginine 347 is part of the active site.

Belongs to the peptidase M17 family. Mn(2+) is required as a cofactor.

It localises to the cytoplasm. It carries out the reaction Release of an N-terminal amino acid, Xaa-|-Yaa-, in which Xaa is preferably Leu, but may be other amino acids including Pro although not Arg or Lys, and Yaa may be Pro. Amino acid amides and methyl esters are also readily hydrolyzed, but rates on arylamides are exceedingly low.. The enzyme catalyses Release of an N-terminal amino acid, preferentially leucine, but not glutamic or aspartic acids.. In terms of biological role, presumably involved in the processing and regular turnover of intracellular proteins. Catalyzes the removal of unsubstituted N-terminal amino acids from various peptides. The protein is Probable cytosol aminopeptidase of Wolbachia pipientis wMel.